A 1197-amino-acid polypeptide reads, in one-letter code: ATP-dependent helicase/nuclease subunit A (1197 aa).

Residues 2–458 (KNWTTEQQAA…IDLAKNFRSR (457 aa)) form the UvrD-like helicase ATP-binding domain. An ATP-binding site is contributed by 23-30 (AAAGSGKT). The UvrD-like helicase C-terminal domain maps to 485–774 (RAALYQGASF…RIMSIHKSKG (290 aa)).

This sequence belongs to the helicase family. AddA subfamily. In terms of assembly, heterodimer of AddA and AddB/RexB. It depends on Mg(2+) as a cofactor.

The enzyme catalyses Couples ATP hydrolysis with the unwinding of duplex DNA by translocating in the 3'-5' direction.. The catalysed reaction is ATP + H2O = ADP + phosphate + H(+). Functionally, the heterodimer acts as both an ATP-dependent DNA helicase and an ATP-dependent, dual-direction single-stranded exonuclease. Recognizes the chi site generating a DNA molecule suitable for the initiation of homologous recombination. The AddA nuclease domain is required for chi fragment generation; this subunit has the helicase and 3' -&gt; 5' nuclease activities. This is ATP-dependent helicase/nuclease subunit A from Alkaliphilus metalliredigens (strain QYMF).